A 310-amino-acid chain; its full sequence is NADH-cytochrome b5 reductase 1 (310 aa).

Residues 32–52 (EWLPYAVALAAILSGGKVFSN) form a helical membrane-spanning segment. Residues 61–166 (TEFQNFELKE…RGPKGAMVYT (106 aa)) form the FAD-binding FR-type domain. FAD-binding positions include 146-161 (AGLRIGQTMKVRGPKG) and 172-209 (KIGMIAGGTGITPMLQIIKAIIRGRPRNGGNDTTQVDL).

The protein belongs to the flavoprotein pyridine nucleotide cytochrome reductase family. In terms of assembly, monomer. Component of the 2-(3-amino-3-carboxypropyl)histidine synthase complex composed of DPH1, DPH2, DPH3 and a NADH-dependent reductase, predominantly CBR1. FAD is required as a cofactor.

The protein resides in the mitochondrion outer membrane. The enzyme catalyses 2 Fe(III)-[cytochrome b5] + NADH = 2 Fe(II)-[cytochrome b5] + NAD(+) + H(+). It catalyses the reaction 2 Fe(3+)-[Dph3] + NADH = 2 Fe(2+)-[Dph3] + NAD(+) + H(+). It participates in protein modification; peptidyl-diphthamide biosynthesis. In terms of biological role, NADH-dependent reductase for DPH3 and cytochrome b5. Required for the first step of diphthamide biosynthesis, a post-translational modification of histidine which occurs in elongation factor 2. DPH1 and DPH2 transfer a 3-amino-3-carboxypropyl (ACP) group from S-adenosyl-L-methionine (SAM) to a histidine residue, the reaction is assisted by a reduction system comprising DPH3 and a NADH-dependent reductase, predominantly CBR1. By reducing DPH3, also involved in the formation of the tRNA wobble base modification mcm5s 2U (5-methoxycarbonylmethyl-2-thiouridine), mediated by the elongator complex. The cytochrome b5/NADH cytochrome b5 reductase electron transfer system supports the catalytic activity of several sterol biosynthetic enzymes. This Ajellomyces capsulatus (strain NAm1 / WU24) (Darling's disease fungus) protein is NADH-cytochrome b5 reductase 1 (CBR1).